A 310-amino-acid polypeptide reads, in one-letter code: Putative carbonic anhydrase 5 (310 aa).

The signal sequence occupies residues 1–20; it reads MPSHLLVLSLLVALLVVVSC. Residues 26–280 enclose the Alpha-carbonic anhydrase domain; sequence HGWGYDENNG…LNGRRIQYRP (255 aa). Zn(2+)-binding residues include histidine 117, histidine 119, and histidine 142. 223 to 224 is a binding site for substrate; that stretch reads TT.

Belongs to the alpha-carbonic anhydrase family.

The protein localises to the secreted. The catalysed reaction is hydrogencarbonate + H(+) = CO2 + H2O. Reversible hydration of carbon dioxide. The chain is Putative carbonic anhydrase 5 (cah-5) from Caenorhabditis elegans.